The primary structure comprises 522 residues: Lysine--tRNA ligase (522 aa).

Residues 44–52 (PSGLPHIGT) carry the 'HIGH' region motif. The short motif at 290 to 294 (KISKS) is the 'KMSKS' region element. Position 293 (lysine 293) interacts with ATP.

This sequence belongs to the class-I aminoacyl-tRNA synthetase family.

Its subcellular location is the cytoplasm. It carries out the reaction tRNA(Lys) + L-lysine + ATP = L-lysyl-tRNA(Lys) + AMP + diphosphate. The polypeptide is Lysine--tRNA ligase (Rickettsia rickettsii (strain Iowa)).